The following is a 125-amino-acid chain: uncharacterized protein (125 aa).

This is an uncharacterized protein from Acanthamoeba polyphaga (Amoeba).